Reading from the N-terminus, the 337-residue chain is Phosphate acyltransferase (337 aa).

It belongs to the PlsX family. In terms of assembly, homodimer. Probably interacts with PlsY.

It is found in the cytoplasm. It carries out the reaction a fatty acyl-[ACP] + phosphate = an acyl phosphate + holo-[ACP]. It participates in lipid metabolism; phospholipid metabolism. Catalyzes the reversible formation of acyl-phosphate (acyl-PO(4)) from acyl-[acyl-carrier-protein] (acyl-ACP). This enzyme utilizes acyl-ACP as fatty acyl donor, but not acyl-CoA. In Moritella marina (Vibrio marinus), this protein is Phosphate acyltransferase.